A 375-amino-acid polypeptide reads, in one-letter code: Queuine tRNA-ribosyltransferase (375 aa).

Asp-89 acts as the Proton acceptor in catalysis. Substrate-binding positions include 89-93, Asp-143, Gln-187, and Gly-214; that span reads DSGGF. Residues 245–251 form an RNA binding region; sequence GVGKPED. Asp-264 acts as the Nucleophile in catalysis. Residues 269-273 are RNA binding; important for wobble base 34 recognition; the sequence is TRNAR. Zn(2+)-binding residues include Cys-302, Cys-304, Cys-307, and His-333.

Belongs to the queuine tRNA-ribosyltransferase family. In terms of assembly, homodimer. Within each dimer, one monomer is responsible for RNA recognition and catalysis, while the other monomer binds to the replacement base PreQ1. Zn(2+) serves as cofactor.

It carries out the reaction 7-aminomethyl-7-carbaguanine + guanosine(34) in tRNA = 7-aminomethyl-7-carbaguanosine(34) in tRNA + guanine. Its pathway is tRNA modification; tRNA-queuosine biosynthesis. Functionally, catalyzes the base-exchange of a guanine (G) residue with the queuine precursor 7-aminomethyl-7-deazaguanine (PreQ1) at position 34 (anticodon wobble position) in tRNAs with GU(N) anticodons (tRNA-Asp, -Asn, -His and -Tyr). Catalysis occurs through a double-displacement mechanism. The nucleophile active site attacks the C1' of nucleotide 34 to detach the guanine base from the RNA, forming a covalent enzyme-RNA intermediate. The proton acceptor active site deprotonates the incoming PreQ1, allowing a nucleophilic attack on the C1' of the ribose to form the product. After dissociation, two additional enzymatic reactions on the tRNA convert PreQ1 to queuine (Q), resulting in the hypermodified nucleoside queuosine (7-(((4,5-cis-dihydroxy-2-cyclopenten-1-yl)amino)methyl)-7-deazaguanosine). The sequence is that of Queuine tRNA-ribosyltransferase from Photobacterium profundum (strain SS9).